We begin with the raw amino-acid sequence, 177 residues long: Baseplate hub assembly protein gp28 (177 aa).

As to quaternary structure, the gp27 and gp28 proteins seem to combine to form a small hub precursor during morphogenesis.

In terms of biological role, baseplate hub assembly chaperone involved in the tail assembly. The protein is Baseplate hub assembly protein gp28 (28) of Enterobacteria phage T4 (Bacteriophage T4).